Here is a 264-residue protein sequence, read N- to C-terminus: Mitochondrial distribution and morphology protein 12 (264 aa).

Residues 1 to 232 enclose the SMP-LTD domain; the sequence is MSFDINWNKI…WPSWINLDFN (232 aa). Positions 240–264 are disordered; sequence ESSSSAEESLPHRDDAQDFSADARA. Residues 248–264 are compositionally biased toward basic and acidic residues; it reads SLPHRDDAQDFSADARA.

Belongs to the MDM12 family. As to quaternary structure, component of the ER-mitochondria encounter structure (ERMES) or MDM complex, composed of MMM1, MDM10, MDM12 and MDM34. An MMM1 homodimer associates with one molecule of MDM12 on each side in a pairwise head-to-tail manner, and the SMP-LTD domains of MMM1 and MDM12 generate a continuous hydrophobic tunnel for phospholipid trafficking.

It is found in the mitochondrion outer membrane. Its subcellular location is the endoplasmic reticulum membrane. Functionally, component of the ERMES/MDM complex, which serves as a molecular tether to connect the endoplasmic reticulum (ER) and mitochondria. Components of this complex are involved in the control of mitochondrial shape and protein biogenesis, and function in nonvesicular lipid trafficking between the ER and mitochondria. MDM12 is required for the interaction of the ER-resident membrane protein MMM1 and the outer mitochondrial membrane-resident beta-barrel protein MDM10. The MDM12-MMM1 subcomplex functions in the major beta-barrel assembly pathway that is responsible for biogenesis of all mitochondrial outer membrane beta-barrel proteins, and acts in a late step after the SAM complex. The MDM10-MDM12-MMM1 subcomplex further acts in the TOM40-specific pathway after the action of the MDM12-MMM1 complex. Essential for establishing and maintaining the structure of mitochondria and maintenance of mtDNA nucleoids. The chain is Mitochondrial distribution and morphology protein 12 from Eremothecium gossypii (strain ATCC 10895 / CBS 109.51 / FGSC 9923 / NRRL Y-1056) (Yeast).